We begin with the raw amino-acid sequence, 423 residues long: Putative gustatory receptor 97a (423 aa).

Residues Met-1 to Gln-31 are Cytoplasmic-facing. A helical transmembrane segment spans residues Leu-32–Gly-52. Residues Arg-53–Lys-65 lie on the Extracellular side of the membrane. A helical membrane pass occupies residues Gly-66–Ile-86. The Cytoplasmic segment spans residues Tyr-87 to Asp-99. The helical transmembrane segment at Thr-100–Trp-120 threads the bilayer. Over Glu-121–Ala-152 the chain is Extracellular. The chain crosses the membrane as a helical span at residues Phe-153–Leu-173. Topologically, residues Tyr-174 to Asn-200 are cytoplasmic. The helical transmembrane segment at Gln-201–Asn-221 threads the bilayer. The Extracellular portion of the chain corresponds to Arg-222–Arg-278. A helical membrane pass occupies residues Phe-279 to Cys-299. The Cytoplasmic segment spans residues Tyr-300–Asp-317. A helical membrane pass occupies residues Leu-318 to Val-338. Topologically, residues Ala-339 to Lys-423 are extracellular. 2 N-linked (GlcNAc...) asparagine glycosylation sites follow: Asn-343 and Asn-393.

The protein belongs to the insect chemoreceptor superfamily. Gustatory receptor (GR) family. Gr22e subfamily. As to expression, in larvae, is expressed in neurons of the terminal external chemosensory organ.

The protein resides in the cell membrane. Probable gustatory receptor which mediates acceptance or avoidance behavior, depending on its substrates. The protein is Putative gustatory receptor 97a (Gr97a) of Drosophila melanogaster (Fruit fly).